A 181-amino-acid polypeptide reads, in one-letter code: CDP-archaeol synthase (181 aa).

5 helical membrane passes run 7 to 27 (VVWALWAMLPAYIPNNAAVLA), 55 to 75 (LIGTAAGTALALGLTQVTPSV), 88 to 108 (LRAGLGLAFGAMLGDIGASFL), 126 to 146 (LDFVVGALLCAFVAAPSWFTE), and 147 to 167 (TFTLPVLVVVVVATPVLHVVT).

The protein belongs to the CDP-archaeol synthase family. The cofactor is Mg(2+).

The protein localises to the cell membrane. The catalysed reaction is 2,3-bis-O-(geranylgeranyl)-sn-glycerol 1-phosphate + CTP + H(+) = CDP-2,3-bis-O-(geranylgeranyl)-sn-glycerol + diphosphate. It functions in the pathway membrane lipid metabolism; glycerophospholipid metabolism. Catalyzes the formation of CDP-2,3-bis-(O-geranylgeranyl)-sn-glycerol (CDP-archaeol) from 2,3-bis-(O-geranylgeranyl)-sn-glycerol 1-phosphate (DGGGP) and CTP. This reaction is the third ether-bond-formation step in the biosynthesis of archaeal membrane lipids. The sequence is that of CDP-archaeol synthase from Haloarcula marismortui (strain ATCC 43049 / DSM 3752 / JCM 8966 / VKM B-1809) (Halobacterium marismortui).